Here is a 210-residue protein sequence, read N- to C-terminus: Protein RFS1 (210 aa).

A Flavodoxin-like domain is found at 4 to 203 (VAILIYSVDD…RVHQLQGKAF (200 aa)).

The protein belongs to the WrbA family.

It is found in the cytoplasm. The protein resides in the membrane raft. The sequence is that of Protein RFS1 (RFS1) from Saccharomyces cerevisiae (strain ATCC 204508 / S288c) (Baker's yeast).